A 133-amino-acid chain; its full sequence is Large ribosomal subunit protein bL19 (133 aa).

This sequence belongs to the bacterial ribosomal protein bL19 family.

In terms of biological role, this protein is located at the 30S-50S ribosomal subunit interface and may play a role in the structure and function of the aminoacyl-tRNA binding site. The protein is Large ribosomal subunit protein bL19 of Stenotrophomonas maltophilia (strain R551-3).